Reading from the N-terminus, the 412-residue chain is L-cysteine:1D-myo-inositol 2-amino-2-deoxy-alpha-D-glucopyranoside ligase (412 aa).

The interval 1 to 30 (MQTWSSPSVPKLRGAPRPLRLHDTATGEVR) is disordered. Residue Cys-43 coordinates Zn(2+). Residues 43–46 (CGIT), Thr-58, and 81–83 (NVT) contribute to the L-cysteinyl-5'-AMP site. The 'HIGH' region motif lies at 45–55 (ITPYDATHLGH). Positions 187–192 (ERGGDP) match the 'ERGGDP' region motif. An L-cysteinyl-5'-AMP-binding site is contributed by Trp-227. Residue Cys-231 participates in Zn(2+) binding. 249–251 (GSD) is an L-cysteinyl-5'-AMP binding site. Position 256 (His-256) interacts with Zn(2+). Ile-283 contacts L-cysteinyl-5'-AMP. The 'KMSKS' region signature appears at 289 to 293 (KMSKS).

It belongs to the class-I aminoacyl-tRNA synthetase family. MshC subfamily. As to quaternary structure, monomer. The cofactor is Zn(2+).

It carries out the reaction 1D-myo-inositol 2-amino-2-deoxy-alpha-D-glucopyranoside + L-cysteine + ATP = 1D-myo-inositol 2-(L-cysteinylamino)-2-deoxy-alpha-D-glucopyranoside + AMP + diphosphate + H(+). In terms of biological role, catalyzes the ATP-dependent condensation of GlcN-Ins and L-cysteine to form L-Cys-GlcN-Ins. The protein is L-cysteine:1D-myo-inositol 2-amino-2-deoxy-alpha-D-glucopyranoside ligase of Actinosynnema mirum (strain ATCC 29888 / DSM 43827 / JCM 3225 / NBRC 14064 / NCIMB 13271 / NRRL B-12336 / IMRU 3971 / 101).